We begin with the raw amino-acid sequence, 318 residues long: MTRHLLAAGDLSRDDATAILDDADRFAQALVGREIKKLPTLRGRTVVTMFYENSTRTRVSFEVAGKWMSADVINVSAAGSSVGKGESLRDTALTLRAAGADALIIRHPASGAAHLLAEWTCGNGDSSDAGPSVINAGDGTHEHPTQALLDALTIRQRLGGIEGRRVVIVGDVLHSRVARSNVMLLSTLGAEVVLVAPPTLLPVGVEGWPVTVSNDFDAELPAADAVLMLRVQAERMNGGFFPSVREYSSLYGLSDRRQAMLPGHAVVLHPGPMLRGMEIASSVADSSQSAVLQQVSNGVHVRMAVLFHVLVGAEEIAA.

Carbamoyl phosphate-binding residues include Arg-56 and Thr-57. An L-aspartate-binding site is contributed by Lys-84. Carbamoyl phosphate contacts are provided by Arg-106, His-143, and Gln-146. Residues Arg-176 and Arg-230 each coordinate L-aspartate. 2 residues coordinate carbamoyl phosphate: Gly-271 and Pro-272.

This sequence belongs to the aspartate/ornithine carbamoyltransferase superfamily. ATCase family. In terms of assembly, heterododecamer (2C3:3R2) of six catalytic PyrB chains organized as two trimers (C3), and six regulatory PyrI chains organized as three dimers (R2).

The enzyme catalyses carbamoyl phosphate + L-aspartate = N-carbamoyl-L-aspartate + phosphate + H(+). It participates in pyrimidine metabolism; UMP biosynthesis via de novo pathway; (S)-dihydroorotate from bicarbonate: step 2/3. Catalyzes the condensation of carbamoyl phosphate and aspartate to form carbamoyl aspartate and inorganic phosphate, the committed step in the de novo pyrimidine nucleotide biosynthesis pathway. This is Aspartate carbamoyltransferase catalytic subunit from Mycobacterium avium (strain 104).